Here is a 63-residue protein sequence, read N- to C-terminus: Large ribosomal subunit protein bL28 (63 aa).

The tract at residues 1-20 is disordered; the sequence is MSRRCAITGKGPMVGNNVSH.

Belongs to the bacterial ribosomal protein bL28 family.

The polypeptide is Large ribosomal subunit protein bL28 (Campylobacter curvus (strain 525.92)).